The following is a 349-amino-acid chain: Protein RecA (349 aa).

69 to 76 provides a ligand contact to ATP; that stretch reads GPESSGKT.

The protein belongs to the RecA family.

The protein resides in the cytoplasm. In terms of biological role, can catalyze the hydrolysis of ATP in the presence of single-stranded DNA, the ATP-dependent uptake of single-stranded DNA by duplex DNA, and the ATP-dependent hybridization of homologous single-stranded DNAs. It interacts with LexA causing its activation and leading to its autocatalytic cleavage. The chain is Protein RecA from Crocosphaera subtropica (strain ATCC 51142 / BH68) (Cyanothece sp. (strain ATCC 51142)).